A 497-amino-acid polypeptide reads, in one-letter code: Zinc metalloproteinase nas-28 (497 aa).

A signal peptide spans 1 to 14 (MFFPVVFFIPFVLG). The propeptide occupies 15 to 120 (APTQKALEKI…IENGNYRSKR (106 aa)). A glycan (N-linked (GlcNAc...) asparagine) is linked at Asn-76. The 199-residue stretch at 121–319 (QAIVDTTNFW…IGVNKLYNCT (199 aa)) folds into the Peptidase M12A domain. Disulfide bonds link Cys-164/Cys-318, Cys-185/Cys-206, Cys-328/Cys-339, Cys-331/Cys-342, Cys-344/Cys-353, Cys-364/Cys-398, and Cys-427/Cys-447. Residue His-214 participates in Zn(2+) binding. Glu-215 is an active-site residue. Zn(2+) contacts are provided by His-218 and His-224. Asn-317 is a glycosylation site (N-linked (GlcNAc...) asparagine). The region spanning 324–354 (IQMKCSNCGITDSRNCNQCKCPRYFTGASCD) is the EGF-like domain. In terms of domain architecture, CUB spans 364–483 (CNGAVLQATS…LTFSIQYRAV (120 aa)). N-linked (GlcNAc...) asparagine glycosylation occurs at Asn-394.

The cofactor is Zn(2+).

The protein resides in the secreted. In terms of biological role, metalloprotease. This Caenorhabditis elegans protein is Zinc metalloproteinase nas-28 (nas-28).